A 150-amino-acid chain; its full sequence is T-complex protein 1 subunit beta (150 aa).

Residue Asp-35 participates in Mg(2+) binding. ADP is bound by residues Gly-36, Thr-37, Thr-38, and Ser-39. ATP contacts are provided by Gly-36, Thr-37, and Thr-38.

It belongs to the TCP-1 chaperonin family. In terms of assembly, component of the chaperonin-containing T-complex (TRiC), a hexadecamer composed of two identical back-to-back stacked rings enclosing a protein folding chamber. Each ring is made up of eight different subunits: TCP1/CCT1, CCT2, CCT3, CCT4, CCT5, CCT6A/CCT6, CCT7, CCT8. Interacts with PACRG. Interacts with FLCN. Interacts with DLEC1. Interacts with SVEP1.

It localises to the cytoplasm. The catalysed reaction is ATP + H2O = ADP + phosphate + H(+). Its function is as follows. Component of the chaperonin-containing T-complex (TRiC), a molecular chaperone complex that assists the folding of actin, tubulin and other proteins upon ATP hydrolysis. The TRiC complex mediates the folding of WRAP53/TCAB1, thereby regulating telomere maintenance. As part of the TRiC complex may play a role in the assembly of BBSome, a complex involved in ciliogenesis regulating transports vesicles to the cilia. This chain is T-complex protein 1 subunit beta, found in Mesocricetus auratus (Golden hamster).